Consider the following 146-residue polypeptide: MVKKVLLINGPNLNLLGTREPEKYGTTSLSDIEKAAIEQAQLKKNDSEVLTYQNNTEGFIIDRIHEARRQGVGFIVINAGAYTHTSVGIRDALLGTAIPFIEVHITNVHQREPFRHQSYLSDKAVAVICGLGVYGYTAAIEYALNY.

Y24 acts as the Proton acceptor in catalysis. Positions 78, 84, and 91 each coordinate substrate. Residue H104 is the Proton donor of the active site. Substrate-binding positions include 105–106 (IT) and R115.

Belongs to the type-II 3-dehydroquinase family. Homododecamer. Adopts a ring-like structure, composed of an arrangement of two hexameric rings stacked on top of one another.

It carries out the reaction 3-dehydroquinate = 3-dehydroshikimate + H2O. It participates in aromatic compound metabolism; 3,4-dihydroxybenzoate biosynthesis; 3,4-dihydroxybenzoate from 3-dehydroquinate: step 1/2. Its function is as follows. Is involved in the catabolism of quinate. Allows the utilization of quinate as carbon source via the beta-ketoadipate pathway. This Candida tropicalis (strain ATCC MYA-3404 / T1) (Yeast) protein is Catabolic 3-dehydroquinase.